The following is a 1345-amino-acid chain: DNA-directed RNA polymerase subunit beta (1345 aa).

This sequence belongs to the RNA polymerase beta chain family. As to quaternary structure, the RNAP catalytic core consists of 2 alpha, 1 beta, 1 beta' and 1 omega subunit. When a sigma factor is associated with the core the holoenzyme is formed, which can initiate transcription.

It catalyses the reaction RNA(n) + a ribonucleoside 5'-triphosphate = RNA(n+1) + diphosphate. Its function is as follows. DNA-dependent RNA polymerase catalyzes the transcription of DNA into RNA using the four ribonucleoside triphosphates as substrates. The sequence is that of DNA-directed RNA polymerase subunit beta from Shewanella sp. (strain ANA-3).